The following is a 187-amino-acid chain: Large ribosomal subunit protein uL5 (187 aa).

Belongs to the universal ribosomal protein uL5 family. In terms of assembly, part of the 50S ribosomal subunit; part of the 5S rRNA/L5/L18/L25 subcomplex. Contacts the 5S rRNA and the P site tRNA. Forms a bridge to the 30S subunit in the 70S ribosome.

This is one of the proteins that bind and probably mediate the attachment of the 5S RNA into the large ribosomal subunit, where it forms part of the central protuberance. In the 70S ribosome it contacts protein S13 of the 30S subunit (bridge B1b), connecting the 2 subunits; this bridge is implicated in subunit movement. Contacts the P site tRNA; the 5S rRNA and some of its associated proteins might help stabilize positioning of ribosome-bound tRNAs. This is Large ribosomal subunit protein uL5 from Mycobacterium leprae (strain Br4923).